Consider the following 535-residue polypeptide: Atrial natriuretic peptide receptor 3 (535 aa).

Residues 1 to 26 (MRSLLLFTFSACVLLARALLAGGASS) form the signal peptide. Positions 27 to 40 (GGGDTGPGNRRRER) are excised as a propeptide. Residues 41–477 (EALAAQKIEV…CKSCGLEESA (437 aa)) lie on the Extracellular side of the membrane. Asparagine 81 carries N-linked (GlcNAc...) asparagine glycosylation. Cystine bridges form between cysteine 103/cysteine 131 and cysteine 208/cysteine 256. N-linked (GlcNAc...) asparagine glycans are attached at residues asparagine 288 and asparagine 389. The chain crosses the membrane as a helical span at residues 478–498 (VTGIVVGALLGAGLLMAFYFF). Topologically, residues 499–535 (RKKYRITIERRNHQEESNIGKHRELREDSIRSHFSVA) are cytoplasmic.

The protein belongs to the ANF receptor family. As to quaternary structure, homodimer; disulfide-linked. Interacts with OSTN.

It localises to the cell membrane. In terms of biological role, receptor for the natriuretic peptide hormones, binding with similar affinities atrial natriuretic peptide NPPA/ANP, brain natriuretic peptide NPPB/BNP, and C-type natriuretic peptide NPPC/CNP. May function as a clearance receptor for NPPA, NPPB and NPPC, regulating their local concentrations and effects. Acts as a regulator of osteoblast differentiation and bone growth by binding to its ligand osteocrin, thereby preventing binding between NPR3/NPR-C and natriuretic peptides, leading to increase cGMP production. This chain is Atrial natriuretic peptide receptor 3 (Npr3), found in Rattus norvegicus (Rat).